We begin with the raw amino-acid sequence, 192 residues long: Ribosome maturation factor RimP (192 aa).

It belongs to the RimP family.

The protein localises to the cytoplasm. Its function is as follows. Required for maturation of 30S ribosomal subunits. The sequence is that of Ribosome maturation factor RimP from Delftia acidovorans (strain DSM 14801 / SPH-1).